We begin with the raw amino-acid sequence, 213 residues long: Uridine kinase (213 aa).

ATP is bound at residue 15–22 (GASASGKS).

The protein belongs to the uridine kinase family.

The protein localises to the cytoplasm. It catalyses the reaction uridine + ATP = UMP + ADP + H(+). The enzyme catalyses cytidine + ATP = CMP + ADP + H(+). Its pathway is pyrimidine metabolism; CTP biosynthesis via salvage pathway; CTP from cytidine: step 1/3. The protein operates within pyrimidine metabolism; UMP biosynthesis via salvage pathway; UMP from uridine: step 1/1. The protein is Uridine kinase of Enterobacter sp. (strain 638).